The following is a 265-amino-acid chain: Hydroxyethylthiazole kinase 1 (265 aa).

Position 39 (Met-39) interacts with substrate. Residues Lys-115 and Thr-168 each coordinate ATP. Gly-195 lines the substrate pocket.

Belongs to the Thz kinase family. The cofactor is Mg(2+).

The catalysed reaction is 5-(2-hydroxyethyl)-4-methylthiazole + ATP = 4-methyl-5-(2-phosphooxyethyl)-thiazole + ADP + H(+). Its pathway is cofactor biosynthesis; thiamine diphosphate biosynthesis; 4-methyl-5-(2-phosphoethyl)-thiazole from 5-(2-hydroxyethyl)-4-methylthiazole: step 1/1. Catalyzes the phosphorylation of the hydroxyl group of 4-methyl-5-beta-hydroxyethylthiazole (THZ). This is Hydroxyethylthiazole kinase 1 from Clostridium botulinum (strain Loch Maree / Type A3).